A 39-amino-acid polypeptide reads, in one-letter code: GRKSDCFRKSGFCAFLKCPSLTLISGKCSRFYLCCKRIR.

Intrachain disulfides connect Cys-6/Cys-28, Cys-13/Cys-34, and Cys-18/Cys-35.

In terms of biological role, bactericidal activity; inhibits S.aureus and E.coli. The chain is Antimicrobial peptide CHP1 from Gallus gallus (Chicken).